The primary structure comprises 1127 residues: Collagen alpha-2(I) chain (1127 aa).

Over residues 1 to 16 (DGKPGLPGPAGPPGPP) the composition is skewed to pro residues. The interval 1-1017 (DGKPGLPGPA…GPAGPAGGGY (1017 aa)) is disordered. Composition is skewed to low complexity over residues 171–191 (AGPA…AAGP), 221–230 (EPGPNGAVGP), and 237–258 (PGNN…AGAP). Residues 260–270 (FPGPRGGPGPQ) show a composition bias toward pro residues. Low complexity predominate over residues 272–282 (PQGAAGQRGLA). Residues 289 to 298 (GVKGDGGPKG) are compositionally biased toward gly residues. Composition is skewed to low complexity over residues 326–345 (ATGP…RGMP), 355–398 (AAGP…AGPA), 436–449 (APGP…TGAT), and 461–473 (QGAA…QGLP). Residues 474-483 (GPAGGAGEAG) are compositionally biased toward gly residues. A compositionally biased stretch (low complexity) spans 508-518 (NPGAAGASGPQ). Over residues 531–568 (GTDGGKGEPGAAGAAGGPGHQGPGGMPGERGAAGGPGG) the composition is skewed to gly residues. Basic and acidic residues predominate over residues 569-580 (KGEKGEAGHRGP). Composition is skewed to low complexity over residues 611–625 (SGSF…ARGA) and 634–647 (PAGA…PGAD). A compositionally biased stretch (gly residues) spans 657–666 (GPSGGKGESG). Composition is skewed to low complexity over residues 667-692 (PSGP…TGAR), 703-730 (FPGA…PAGK), and 758-778 (SGEK…PLGL). The segment covering 792-801 (GSPGGAGAVG) has biased composition (gly residues). Composition is skewed to low complexity over residues 802 to 824 (EAGR…LGLP) and 860 to 872 (PGSS…AGAP). Gly residues predominate over residues 876–897 (GPSGGAGRPGNRGESGPGGAAG). A compositionally biased stretch (low complexity) spans 898–913 (AVGPAGARGAAGPSGP). Basic and acidic residues predominate over residues 914 to 928 (RGEKGVAGEKGERGM). 2 stretches are compositionally biased toward low complexity: residues 937 to 956 (LQGM…AGPN) and 986 to 997 (PGARGPPGYVGP). A compositionally biased stretch (pro residues) spans 998-1010 (AGPPGXPGLPGPA). Residues 1093 to 1127 (RTNKPSRLPLLDLAPLDLGGADQEFGLDLGPVCFK) enclose the Fibrillar collagen NC1 domain.

The protein belongs to the fibrillar collagen family.

The protein resides in the secreted. It localises to the extracellular space. The protein localises to the extracellular matrix. The chain is Collagen alpha-2(I) chain from Epinephelus marginatus (Dusky grouper).